Reading from the N-terminus, the 230-residue chain is Ureidoacrylate amidohydrolase RutB (230 aa).

Asp24 acts as the Proton acceptor in catalysis. Lys133 is an active-site residue. The active-site Nucleophile is Cys166.

This sequence belongs to the isochorismatase family. RutB subfamily.

It catalyses the reaction (Z)-3-ureidoacrylate + H2O + H(+) = (Z)-3-aminoacrylate + NH4(+) + CO2. It carries out the reaction (Z)-3-ureidoacrylate + H2O = (Z)-3-aminoacrylate + carbamate + H(+). The enzyme catalyses (Z)-2-methylureidoacrylate + H2O + H(+) = (Z)-2-methylaminoacrylate + NH4(+) + CO2. Its function is as follows. Hydrolyzes ureidoacrylate to form aminoacrylate and carbamate. The carbamate hydrolyzes spontaneously, thereby releasing one of the nitrogen atoms of the pyrimidine ring as ammonia and one of its carbon atoms as CO2. This Escherichia coli O6:K15:H31 (strain 536 / UPEC) protein is Ureidoacrylate amidohydrolase RutB.